Reading from the N-terminus, the 336-residue chain is Nucleoid-associated protein ECA2747 (336 aa).

Residues 317 to 336 (KGTPPNLRDQLQRRTSGGKQ) form a disordered region.

Belongs to the YejK family.

The protein localises to the cytoplasm. The protein resides in the nucleoid. The polypeptide is Nucleoid-associated protein ECA2747 (Pectobacterium atrosepticum (strain SCRI 1043 / ATCC BAA-672) (Erwinia carotovora subsp. atroseptica)).